We begin with the raw amino-acid sequence, 332 residues long: Ketol-acid reductoisomerase (NADP(+)) 1 (332 aa).

The KARI N-terminal Rossmann domain maps to 2-182 (AELFYDADAD…GGTRAGVIKT (181 aa)). NADP(+) is bound by residues 25 to 28 (YGSQ), Ser-51, Ser-53, and 83 to 86 (DPIQ). His-108 is an active-site residue. Gly-134 is an NADP(+) binding site. Residues 183-328 (TFTEETETDL…KELRKLMSWV (146 aa)) form the KARI C-terminal knotted domain. Asp-191, Glu-195, Glu-227, and Glu-231 together coordinate Mg(2+). Substrate is bound at residue Ser-252.

The protein belongs to the ketol-acid reductoisomerase family. The cofactor is Mg(2+).

It catalyses the reaction (2R)-2,3-dihydroxy-3-methylbutanoate + NADP(+) = (2S)-2-acetolactate + NADPH + H(+). The enzyme catalyses (2R,3R)-2,3-dihydroxy-3-methylpentanoate + NADP(+) = (S)-2-ethyl-2-hydroxy-3-oxobutanoate + NADPH + H(+). It functions in the pathway amino-acid biosynthesis; L-isoleucine biosynthesis; L-isoleucine from 2-oxobutanoate: step 2/4. Its pathway is amino-acid biosynthesis; L-valine biosynthesis; L-valine from pyruvate: step 2/4. Involved in the biosynthesis of branched-chain amino acids (BCAA). Catalyzes an alkyl-migration followed by a ketol-acid reduction of (S)-2-acetolactate (S2AL) to yield (R)-2,3-dihydroxy-isovalerate. In the isomerase reaction, S2AL is rearranged via a Mg-dependent methyl migration to produce 3-hydroxy-3-methyl-2-ketobutyrate (HMKB). In the reductase reaction, this 2-ketoacid undergoes a metal-dependent reduction by NADPH to yield (R)-2,3-dihydroxy-isovalerate. The polypeptide is Ketol-acid reductoisomerase (NADP(+)) 1 (Streptomyces coelicolor (strain ATCC BAA-471 / A3(2) / M145)).